A 379-amino-acid chain; its full sequence is Chaperone protein DnaJ (379 aa).

The J domain occupies 5 to 70 (DFYEVLGVSR…QKRSAYDQYG (66 aa)). A CR-type zinc finger spans residues 134–212 (GCDKEIEVPT…CHGEGRVHKT (79 aa)). Zn(2+) is bound by residues C147, C150, C164, C167, C186, C189, C200, and C203. CXXCXGXG motif repeat units follow at residues 147–154 (CDPCEGTG), 164–171 (CSTCHGQG), 186–193 (CPTCHGKG), and 200–207 (CNSCHGEG).

Belongs to the DnaJ family. Homodimer. The cofactor is Zn(2+).

Its subcellular location is the cytoplasm. Its function is as follows. Participates actively in the response to hyperosmotic and heat shock by preventing the aggregation of stress-denatured proteins and by disaggregating proteins, also in an autonomous, DnaK-independent fashion. Unfolded proteins bind initially to DnaJ; upon interaction with the DnaJ-bound protein, DnaK hydrolyzes its bound ATP, resulting in the formation of a stable complex. GrpE releases ADP from DnaK; ATP binding to DnaK triggers the release of the substrate protein, thus completing the reaction cycle. Several rounds of ATP-dependent interactions between DnaJ, DnaK and GrpE are required for fully efficient folding. Also involved, together with DnaK and GrpE, in the DNA replication of plasmids through activation of initiation proteins. In Aliivibrio fischeri (strain ATCC 700601 / ES114) (Vibrio fischeri), this protein is Chaperone protein DnaJ.